Here is a 380-residue protein sequence, read N- to C-terminus: 3-dehydroquinate synthase (380 aa).

NAD(+) contacts are provided by residues 68-73, 102-106, 126-127, Lys-139, and Lys-148; these read PGEPNK, GTVLD, and TT. Zn(2+) is bound by residues Glu-181, His-243, and His-259.

Belongs to the sugar phosphate cyclases superfamily. Dehydroquinate synthase family. NAD(+) serves as cofactor. The cofactor is Co(2+). It depends on Zn(2+) as a cofactor.

The protein resides in the cytoplasm. It catalyses the reaction 7-phospho-2-dehydro-3-deoxy-D-arabino-heptonate = 3-dehydroquinate + phosphate. The protein operates within metabolic intermediate biosynthesis; chorismate biosynthesis; chorismate from D-erythrose 4-phosphate and phosphoenolpyruvate: step 2/7. Its function is as follows. Catalyzes the conversion of 3-deoxy-D-arabino-heptulosonate 7-phosphate (DAHP) to dehydroquinate (DHQ). This Chlamydia pneumoniae (Chlamydophila pneumoniae) protein is 3-dehydroquinate synthase (aroB).